A 570-amino-acid chain; its full sequence is Dihydroxy-acid dehydratase (570 aa).

A [2Fe-2S] cluster-binding site is contributed by C61. Residue D94 participates in Mg(2+) binding. C135 serves as a coordination point for [2Fe-2S] cluster. 2 residues coordinate Mg(2+): D136 and K137. K137 bears the N6-carboxylysine mark. C207 is a binding site for [2Fe-2S] cluster. Residue E459 participates in Mg(2+) binding. The active-site Proton acceptor is the S485.

This sequence belongs to the IlvD/Edd family. As to quaternary structure, homodimer. [2Fe-2S] cluster serves as cofactor. The cofactor is Mg(2+).

The enzyme catalyses (2R)-2,3-dihydroxy-3-methylbutanoate = 3-methyl-2-oxobutanoate + H2O. The catalysed reaction is (2R,3R)-2,3-dihydroxy-3-methylpentanoate = (S)-3-methyl-2-oxopentanoate + H2O. The protein operates within amino-acid biosynthesis; L-isoleucine biosynthesis; L-isoleucine from 2-oxobutanoate: step 3/4. It participates in amino-acid biosynthesis; L-valine biosynthesis; L-valine from pyruvate: step 3/4. Its function is as follows. Functions in the biosynthesis of branched-chain amino acids. Catalyzes the dehydration of (2R,3R)-2,3-dihydroxy-3-methylpentanoate (2,3-dihydroxy-3-methylvalerate) into 2-oxo-3-methylpentanoate (2-oxo-3-methylvalerate) and of (2R)-2,3-dihydroxy-3-methylbutanoate (2,3-dihydroxyisovalerate) into 2-oxo-3-methylbutanoate (2-oxoisovalerate), the penultimate precursor to L-isoleucine and L-valine, respectively. This Lactococcus lactis subsp. lactis (strain IL1403) (Streptococcus lactis) protein is Dihydroxy-acid dehydratase.